The chain runs to 320 residues: ATP-dependent 6-phosphofructokinase (320 aa).

Residue Gly12 coordinates ATP. Residues 22 to 26 and 55 to 60 each bind ADP; these read RGVVR and RYSVSD. ATP contacts are provided by residues 73 to 74 and 103 to 106; these read RF and GDGS. Residue Asp104 participates in Mg(2+) binding. 126–128 contributes to the substrate binding site; that stretch reads TID. Asp128 acts as the Proton acceptor in catalysis. Arg155 is a binding site for ADP. Residues Arg163 and 170–172 each bind substrate; that span reads MGR. Residues 186–188, Lys212, and 214–216 each bind ADP; these read GCE and KKH. Substrate-binding positions include Glu223, Arg244, and 250–253; that span reads HIQR.

The protein belongs to the phosphofructokinase type A (PFKA) family. ATP-dependent PFK group I subfamily. Prokaryotic clade 'B1' sub-subfamily. In terms of assembly, homotetramer. Mg(2+) serves as cofactor.

Its subcellular location is the cytoplasm. It catalyses the reaction beta-D-fructose 6-phosphate + ATP = beta-D-fructose 1,6-bisphosphate + ADP + H(+). The protein operates within carbohydrate degradation; glycolysis; D-glyceraldehyde 3-phosphate and glycerone phosphate from D-glucose: step 3/4. Allosterically activated by ADP and other diphosphonucleosides, and allosterically inhibited by phosphoenolpyruvate. Its function is as follows. Catalyzes the phosphorylation of D-fructose 6-phosphate to fructose 1,6-bisphosphate by ATP, the first committing step of glycolysis. The sequence is that of ATP-dependent 6-phosphofructokinase from Buchnera aphidicola subsp. Baizongia pistaciae (strain Bp).